A 597-amino-acid chain; its full sequence is MTTQTPNGFTLDNAGKRIVVDPVTRIEGHMRCEVNVNDQGIITNAVSTGTMWRGLEVILKGRDPRDAWAFTERICGVCTGTHALTSVRAVESALGITIPDNANSIRNMMQLNLQIHDHIVHFYHLHALDWVNPVNALRADPKATSELQQMVSPSHPLSSPGYFRDVQNRLKKFVESGQLGLFKNGYWDNPAYKLPPEADLMATTHYLEALDLQKEVVKVHTIFGGKNPHPNWLVGGVPCPINVDGVGAVGAINMERLNLVSSIIDRCTEFTRNVYLPDLKAIGGFYKEWLYGGGLSGQSVLSYGDIPENPNDFSAGQLHLPRGAIINGNLNEVHDVDTTDPEQVQEFVDHSWYDYGEPGMGLHPWDGRTEPKFELGPNLKGTRTNIENIDEGAKYSWIKAPRWRGNAMEVGPLAATSSVTRKGHEDIKNQVEGLLRDMNLPVSALFSTLGRTAARALEAEYCCRLQKHFFDKLVTNIKNGDSSTANVEKWDPSTWPKEAKGVGMTEAPRGALGHWVKIKDGRIENYQCVVPTTWNGSPRDSKGNIGAFEASLLNTKMERPEEPVEILRTLHSFDPCLACSTHVMSAEGAPLTTVKVR.

Residues Cys-75, Cys-78, Cys-576, and Cys-579 each contribute to the Ni(2+) site.

This sequence belongs to the [NiFe]/[NiFeSe] hydrogenase large subunit family. In terms of assembly, heterodimer of a large and a small subunit. It depends on Ni(2+) as a cofactor.

The protein resides in the cell membrane. The catalysed reaction is H2 + A = AH2. Its function is as follows. This enzyme recycles the H(2) produced by nitrogenase to increase the production of ATP and to protect nitrogenase against inhibition or damage by O(2) under carbon- or phosphate-limited conditions. The sequence is that of Uptake hydrogenase large subunit (hupB) from Rhodobacter capsulatus (Rhodopseudomonas capsulata).